The sequence spans 303 residues: Probable 5-dehydro-4-deoxyglucarate dehydratase (303 aa).

The protein belongs to the DapA family.

The enzyme catalyses 5-dehydro-4-deoxy-D-glucarate + H(+) = 2,5-dioxopentanoate + CO2 + H2O. It participates in carbohydrate acid metabolism; D-glucarate degradation; 2,5-dioxopentanoate from D-glucarate: step 2/2. The sequence is that of Probable 5-dehydro-4-deoxyglucarate dehydratase from Acinetobacter baylyi (strain ATCC 33305 / BD413 / ADP1).